The primary structure comprises 401 residues: Probable N-acetyl-gamma-glutamyl-phosphate reductase, chloroplastic (401 aa).

Residues 1 to 48 (MSTASAFSSIQGCWFKGERKIRVADKRAKRLTLGSHVASPSSMSFRVS) constitute a chloroplast transit peptide. C205 is an active-site residue.

It belongs to the NAGSA dehydrogenase family. Type 1 subfamily. Homotetramer.

Its subcellular location is the plastid. The protein localises to the chloroplast. The catalysed reaction is N-acetyl-L-glutamate 5-semialdehyde + phosphate + NADP(+) = N-acetyl-L-glutamyl 5-phosphate + NADPH + H(+). The protein operates within amino-acid biosynthesis; L-arginine biosynthesis; N(2)-acetyl-L-ornithine from L-glutamate: step 3/4. The chain is Probable N-acetyl-gamma-glutamyl-phosphate reductase, chloroplastic from Arabidopsis thaliana (Mouse-ear cress).